A 73-amino-acid chain; its full sequence is Disintegrin trigramin-gamma (73 aa).

The Disintegrin domain maps to 1-73 (EAGEDCDCGS…AGCPRNPLHA (73 aa)). Intrachain disulfides connect cysteine 6-cysteine 21, cysteine 8-cysteine 16, cysteine 15-cysteine 38, cysteine 29-cysteine 35, cysteine 34-cysteine 59, and cysteine 47-cysteine 66. Residues 51-53 (RGD) carry the Cell attachment site motif.

It belongs to the venom metalloproteinase (M12B) family. P-II subfamily. P-IIa sub-subfamily. In terms of assembly, monomer (disintegrin). Expressed by the venom gland.

It localises to the secreted. In terms of biological role, inhibits fibrinogen interaction with platelets. Acts by binding to alpha-IIb/beta-3 (ITGA2B/ITGB3) on the platelet surface and inhibits aggregation induced by ADP, thrombin, platelet-activating factor and collagen. The polypeptide is Disintegrin trigramin-gamma (Craspedocephalus gramineus (Bamboo pit viper)).